The chain runs to 336 residues: DNA-directed RNA polymerase subunit alpha (336 aa).

The alpha N-terminal domain (alpha-NTD) stretch occupies residues 1–226 (MLIAQRPTLS…ELFGLARELN (226 aa)). Positions 241–336 (AALAADMALP…DDAAFSDDEL (96 aa)) are alpha C-terminal domain (alpha-CTD).

The protein belongs to the RNA polymerase alpha chain family. Homodimer. The RNAP catalytic core consists of 2 alpha, 1 beta, 1 beta' and 1 omega subunit. When a sigma factor is associated with the core the holoenzyme is formed, which can initiate transcription.

It carries out the reaction RNA(n) + a ribonucleoside 5'-triphosphate = RNA(n+1) + diphosphate. In terms of biological role, DNA-dependent RNA polymerase catalyzes the transcription of DNA into RNA using the four ribonucleoside triphosphates as substrates. This chain is DNA-directed RNA polymerase subunit alpha, found in Arthrobacter sp. (strain FB24).